The chain runs to 437 residues: MEDASLKSFLEKVGYRVVDRTLSREYEVARLIAETQGCGPPLLARIEGVRQPVAVNVVDTREKLYKALGVTGDSEAYAKIVDSTMRPGRLEYVDKPPLDEMPEGFEGLPAARFYEGEAGLYLSSGIVIACYEGVCNASIHRLLILGRERAAIRIVPRHLWHLYRKARERGEDLPATVVVGLHPAVLLAAATSPPLGVFELGLAAGMLGGSMKVYRSPVHGNPVPLGAAMVADVWITGEQVEEGPYVDALLTYDRVRRQPVVRLEAAYIKEGEYTHTIMGGSLEHVNLMGFPREASIWEAVRRALPRVRAVRLTPASGGWLHAVIAVEKQHEGDGKTAIMAAFAAHPSLKHVVVVDSDVDVDDPMQVEWAIATRFQADKDLVIIPRARGSTLDPSAADGLTAKMGLDATKPLDAGMGYERGRIPGFKWGSRRCHQPGD.

2 residues coordinate Mn(2+): asparagine 136 and glutamate 199. Catalysis depends on aspartate 247, which acts as the Proton acceptor.

It belongs to the UbiD family. Prenylated FMN serves as cofactor. Requires Mn(2+) as cofactor.

The catalysed reaction is (2E)-3-methyl-5-phosphooxypent-2-enoate + H(+) = isopentenyl phosphate + CO2. It participates in isoprenoid biosynthesis; isopentenyl diphosphate biosynthesis via mevalonate pathway. In terms of biological role, catalyzes the conversion of trans-anhydromevalonate 5-phosphate (tAHMP) into isopentenyl phosphate. Involved in the archaeal mevalonate (MVA) pathway, which provides fundamental precursors for isoprenoid biosynthesis, such as isopentenyl diphosphate (IPP) and dimethylallyl diphosphate (DMAPP). In Aeropyrum pernix (strain ATCC 700893 / DSM 11879 / JCM 9820 / NBRC 100138 / K1), this protein is Anhydromevalonate phosphate decarboxylase.